Here is a 407-residue protein sequence, read N- to C-terminus: Putative cystathionine beta-lyase (407 aa).

An N6-(pyridoxal phosphate)lysine modification is found at lysine 237.

The protein belongs to the class-II pyridoxal-phosphate-dependent aminotransferase family. MalY/PatB cystathionine beta-lyase subfamily. Pyridoxal 5'-phosphate serves as cofactor.

The catalysed reaction is L,L-cystathionine + H2O = L-homocysteine + pyruvate + NH4(+). It carries out the reaction an S-substituted L-cysteine + H2O = a thiol + pyruvate + NH4(+). Its pathway is amino-acid biosynthesis; L-methionine biosynthesis via de novo pathway; L-homocysteine from L-cystathionine: step 1/1. This Mycobacterium tuberculosis (strain CDC 1551 / Oshkosh) protein is Putative cystathionine beta-lyase.